The primary structure comprises 172 residues: Regulator of hemoglobinization and erythroid cell expansion protein (172 aa).

The chain crosses the membrane as a helical span at residues 9-29; it reads WHGLVIAVVSLFLQACFLTAI. A disordered region spans residues 52-106; the sequence is VPRPSPGHHHPPAVKEMKETQTERDIPMSDSLYRHDSDTPSDSLDSSCSSPPACQ. Over residues 64-89 the composition is skewed to basic and acidic residues; that stretch reads AVKEMKETQTERDIPMSDSLYRHDSD. Low complexity predominate over residues 91–103; it reads PSDSLDSSCSSPP. Tyr132 and Tyr141 each carry phosphotyrosine.

As to quaternary structure, interacts with EPOR; this interaction occurs in a erythropoietin (EPO)-dependent manner. Interacts with JAK2; this interaction occurs in a erythropoietin (EPO)-dependent manner. Interacts (via tyrosine-phosphorylated form) with GRB2. Phosphorylated. Phosphorylation on Tyr-132 and Tyr-141 occurs in a erythropoietin (EPO)-dependent manner. As to expression, expressed in the proerythroblasts (at protein level). Expressed strongly in the kidney. Expressed weakly in the pancreas, liver and lung. Expressed strongly in erythroid progenitor cells (EPCs). Expressed weakly in T-cells and neutrophils.

The protein localises to the cell membrane. Functionally, acts as a signaling transduction factor of the EPO-EPOR signaling pathway promoting erythroid cell differentiation. This Homo sapiens (Human) protein is Regulator of hemoglobinization and erythroid cell expansion protein.